A 492-amino-acid chain; its full sequence is FAD-linked oxidoreductase pgmH (492 aa).

The FAD-binding PCMH-type domain maps to 54 to 224 (SIRLATLVVY…TEFKYRVHKQ (171 aa)).

Belongs to the oxygen-dependent FAD-linked oxidoreductase family. Requires FAD as cofactor.

The protein operates within pigment biosynthesis. It participates in secondary metabolite biosynthesis. In terms of biological role, FAD-linked oxidoreductase; part of the gene cluster that mediates the biosynthesis of pleosporalin A, ascomycone A, as well as a third cryptic naphthoquinone derived pigment, all responsible for the coloration of conidia. Essential for the production of pleosporalin A, but not the 2 other final products. The pathway begins with the biosynthesis of the cyclized heptaketide 3-acetonyl-1,6,8-trihydroxy-2-naphthaldehyde by the NR-PKS pgmA. The C-6 hydroxyl group is further methylated by the O-methyltransferase pgmB to yield fusarubinaldehyde which is in turn oxidized by the cytochrome P450 monooxygenase pgmC at C-9. The C-1 hydroxyl group is then methylated spontaneously. Although pgmE, pgmD and pgmH are essential for the production of pleosporalin A, it is not the case for the 2 other final products and it remains difficult to assign a specific function to each enzyme. PgmF and pgmG seem not to be involved in pigment biosynthesis although they were regulated by the cluster-specific transcription factor pgmR. This Aspergillus terreus protein is FAD-linked oxidoreductase pgmH.